We begin with the raw amino-acid sequence, 58 residues long: UPF0391 membrane protein Gbem_0127 (58 aa).

A run of 2 helical transmembrane segments spans residues 4 to 24 (WALIFFIIAIIAAVFGFGGIA) and 33 to 53 (ILFYLFLVVAVVMLVSALLAG).

The protein belongs to the UPF0391 family.

It is found in the cell membrane. The sequence is that of UPF0391 membrane protein Gbem_0127 from Citrifermentans bemidjiense (strain ATCC BAA-1014 / DSM 16622 / JCM 12645 / Bem) (Geobacter bemidjiensis).